A 220-amino-acid polypeptide reads, in one-letter code: Protein-L-isoaspartate O-methyltransferase (220 aa).

Ser68 is a catalytic residue.

Belongs to the methyltransferase superfamily. L-isoaspartyl/D-aspartyl protein methyltransferase family.

It is found in the cytoplasm. It carries out the reaction [protein]-L-isoaspartate + S-adenosyl-L-methionine = [protein]-L-isoaspartate alpha-methyl ester + S-adenosyl-L-homocysteine. Catalyzes the methyl esterification of L-isoaspartyl residues in peptides and proteins that result from spontaneous decomposition of normal L-aspartyl and L-asparaginyl residues. It plays a role in the repair and/or degradation of damaged proteins. This Dictyoglomus turgidum (strain DSM 6724 / Z-1310) protein is Protein-L-isoaspartate O-methyltransferase.